The chain runs to 331 residues: MKKPVVIGLAIAAIVAVIAGGTWWYQSRQDDGLTLYGNVDIRTVNISFRVGGRLASLNVDEGDTIKAGQVLGELDHAPYENALMQAKAGVSVAQAQYDLMLAGYRDEEIAQAAAAVRQAQAAYDYAQNFYNRQQGLWKSRTISANDLENARSSRDQAQATLKSAQDKLSQYRTGNREQDIAQAKASLEQAKAQLAQAQLDLQDTTLIAPANGTLLTRAVEPGSMLSAGSTVLTLSLTRPVWVRAYVDERNLSQTQPGRDILLYTDGRPDKPYHGKIGFVSPTAEFTPKTVETPDLRTDLVYRLRIIVTDADDALRQGMPVTVKFNYEARHE.

The signal sequence occupies residues 1 to 19 (MKKPVVIGLAIAAIVAVIA). The stretch at 107 to 208 (EEIAQAAAAV…LDLQDTTLIA (102 aa)) forms a coiled coil.

The protein belongs to the UPF0194 family.

Its subcellular location is the periplasm. In Salmonella gallinarum (strain 287/91 / NCTC 13346), this protein is UPF0194 membrane protein YbhG.